The following is a 209-amino-acid chain: Orotate phosphoribosyltransferase (209 aa).

Residues arginine 96, lysine 100, histidine 102, and glutamate 122–serine 130 contribute to the 5-phospho-alpha-D-ribose 1-diphosphate site. Serine 126 serves as a coordination point for orotate.

This sequence belongs to the purine/pyrimidine phosphoribosyltransferase family. PyrE subfamily. As to quaternary structure, homodimer. It depends on Mg(2+) as a cofactor.

It carries out the reaction orotidine 5'-phosphate + diphosphate = orotate + 5-phospho-alpha-D-ribose 1-diphosphate. The protein operates within pyrimidine metabolism; UMP biosynthesis via de novo pathway; UMP from orotate: step 1/2. Functionally, catalyzes the transfer of a ribosyl phosphate group from 5-phosphoribose 1-diphosphate to orotate, leading to the formation of orotidine monophosphate (OMP). This is Orotate phosphoribosyltransferase from Listeria monocytogenes serovar 1/2a (strain ATCC BAA-679 / EGD-e).